The primary structure comprises 107 residues: Flagellar hook-basal body complex protein FliE (107 aa).

It belongs to the FliE family.

Its subcellular location is the bacterial flagellum basal body. This Cupriavidus pinatubonensis (strain JMP 134 / LMG 1197) (Cupriavidus necator (strain JMP 134)) protein is Flagellar hook-basal body complex protein FliE.